The following is a 186-amino-acid chain: MGRDHTSKQHVRSGHRTAPKSDNVYLQLLVKLYSFLARRTDAPFNKVILKSLFLSKINRPPVSVSRISRALKQKGAAEKTIVVVGTVTDDNRLLEFPKATIAALRFTAGAKDRILKNGGEAITLDQLALRAPKGQNTLIVRGPRNSREAVRHFGFGPHKGKAPRILSKGRKFERARGRRRSRGFKV.

It belongs to the eukaryotic ribosomal protein eL18 family. Component of the large ribosomal subunit. Mature ribosomes consist of a small (40S) and a large (60S) subunit. The 40S subunit contains about 32 different proteins and 1 molecule of RNA (18S). The 60S subunit contains 45 different proteins and 3 molecules of RNA (25S, 5.8S and 5S).

The protein localises to the cytoplasm. In terms of biological role, component of the ribosome, a large ribonucleoprotein complex responsible for the synthesis of proteins in the cell. The small ribosomal subunit (SSU) binds messenger RNAs (mRNAs) and translates the encoded message by selecting cognate aminoacyl-transfer RNA (tRNA) molecules. The large subunit (LSU) contains the ribosomal catalytic site termed the peptidyl transferase center (PTC), which catalyzes the formation of peptide bonds, thereby polymerizing the amino acids delivered by tRNAs into a polypeptide chain. The nascent polypeptides leave the ribosome through a tunnel in the LSU and interact with protein factors that function in enzymatic processing, targeting, and the membrane insertion of nascent chains at the exit of the ribosomal tunnel. In Candida albicans (strain SC5314 / ATCC MYA-2876) (Yeast), this protein is Large ribosomal subunit protein eL18.